We begin with the raw amino-acid sequence, 929 residues long: Ras guanine nucleotide exchange factor M (929 aa).

Polar residues predominate over residues 1-15 (MWQKPSLTKSMMNEV). Disordered stretches follow at residues 1–102 (MWQK…AAGS) and 169–316 (TNNN…SKSL). Positions 16 to 33 (SSNSPKSPTLTSSPSTQS) are enriched in low complexity. Over residues 44–67 (LDGGGGGSNRLIFGGSGGGSGGGS) the composition is skewed to gly residues. Composition is skewed to low complexity over residues 68-80 (LPSS…VNPF) and 169-191 (TNNN…NNDG). Gly residues predominate over residues 192 to 202 (SGSGSGAGGSF). The segment covering 203-246 (IGTTTSAKTTSTTSTSAATTTTTTTTSSSSSSPSSSSPSSTSPT) has biased composition (low complexity). Residues 247–256 (IASNNDNNNK) are compositionally biased toward polar residues. Residues 270–287 (PPLTLSQSQTQQQQQQKV) show a composition bias toward low complexity. The span at 295 to 305 (RFSTNSSGSQS) shows a compositional bias: polar residues. The region spanning 390–528 (NKFVVVSGPK…PILDLYEKLK (139 aa)) is the N-terminal Ras-GEF domain. Residues 540–583 (SLSGSGGISNNNNGSDLKNSNNGNNSSNNNNSSSNSSSSSSSSD) are disordered. Residues 676–911 (SPQDIAKQLT…YAFSKFIESP (236 aa)) form the Ras-GEF domain.

Promotes the exchange of Ras-bound GDP by GTP. The sequence is that of Ras guanine nucleotide exchange factor M (gefM) from Dictyostelium discoideum (Social amoeba).